We begin with the raw amino-acid sequence, 219 residues long: ATP synthase delta chain, chloroplastic (219 aa).

Residues 1-33 (MLAAKSIAGPRAFKASAVRAAPKAGRRTVVVMA) constitute a chloroplast transit peptide.

This sequence belongs to the ATPase delta chain family. As to quaternary structure, F-type ATPases have 2 components, F(1) - the catalytic core - and F(0) - the membrane proton channel. F(1) has five subunits: alpha(3), beta(3), gamma(1), delta(1), epsilon(1). F(0) has four main subunits: a(1), b(1), b'(1) and c(10-14). The alpha and beta chains form an alternating ring which encloses part of the gamma chain. F(1) is attached to F(0) by a central stalk formed by the gamma and epsilon chains, while a peripheral stalk is formed by the delta, b and b' chains.

The protein localises to the plastid. It is found in the chloroplast thylakoid membrane. Its function is as follows. F(1)F(0) ATP synthase produces ATP from ADP in the presence of a proton or sodium gradient. F-type ATPases consist of two structural domains, F(1) containing the extramembraneous catalytic core and F(0) containing the membrane proton channel, linked together by a central stalk and a peripheral stalk. During catalysis, ATP synthesis in the catalytic domain of F(1) is coupled via a rotary mechanism of the central stalk subunits to proton translocation. In terms of biological role, this protein seems to be part of the stalk that links CF(0) to CF(1). It either transmits conformational changes from CF(0) into CF(1) or is implicated in proton conduction. The protein is ATP synthase delta chain, chloroplastic of Chlamydomonas reinhardtii (Chlamydomonas smithii).